Consider the following 227-residue polypeptide: Nucleoside triphosphate pyrophosphatase (227 aa).

The active-site Proton acceptor is D77.

The protein belongs to the Maf family. A divalent metal cation serves as cofactor.

It localises to the cytoplasm. It carries out the reaction a ribonucleoside 5'-triphosphate + H2O = a ribonucleoside 5'-phosphate + diphosphate + H(+). The enzyme catalyses a 2'-deoxyribonucleoside 5'-triphosphate + H2O = a 2'-deoxyribonucleoside 5'-phosphate + diphosphate + H(+). Functionally, nucleoside triphosphate pyrophosphatase. May have a dual role in cell division arrest and in preventing the incorporation of modified nucleotides into cellular nucleic acids. The polypeptide is Nucleoside triphosphate pyrophosphatase (Rickettsia typhi (strain ATCC VR-144 / Wilmington)).